The following is a 500-amino-acid chain: Maturase K (500 aa).

It belongs to the intron maturase 2 family. MatK subfamily.

The protein localises to the plastid. The protein resides in the chloroplast. Usually encoded in the trnK tRNA gene intron. Probably assists in splicing its own and other chloroplast group II introns. The polypeptide is Maturase K (Helianthus annuus (Common sunflower)).